Here is a 199-residue protein sequence, read N- to C-terminus: Recombination protein RecR (199 aa).

Residues 58–73 (CKTCGNIDTQSPCTVC) form a C4-type zinc finger. The Toprim domain occupies 81–176 (AMIVVVADVA…KVTRLAHGVP (96 aa)).

It belongs to the RecR family.

Functionally, may play a role in DNA repair. It seems to be involved in an RecBC-independent recombinational process of DNA repair. It may act with RecF and RecO. This Bradyrhizobium sp. (strain ORS 278) protein is Recombination protein RecR.